We begin with the raw amino-acid sequence, 394 residues long: MEITQVIYVNDHNNIEANLTGQEEMNTTMEIESSSVPQSKNYKKWLRISIYVFFVLACQALSTILGRVYYENGGKSTWMGTLVQLIGFPVLFLFRFFSQTKNPKPTEADFRKFSSFTILGSVYIVTGLLVSANSYMSSVGLLYLPVSTFSLILASQLAFTAFFSYFLNSQKFTPFIVNSLFLLTISSALLVVNTDSENTAKVSRVKYVIGIICTIGASAGIGLLLSLVQLILRKVLKKQTFSTVTDLVAYQSLVASCVVLIGLFASGEWKTLTSEMENYKLGKVPYVMTLASIAISWQVYTIGVVGLIFESSSVFSNSITAVGLPIVPVVAVIVFHDKMNASKIFSIILAIWGFISFVYQHYLDEKKLKTSHTSPVGDPHLLPAEEGHTNIHSV.

10 helical membrane-spanning segments follow: residues 45–65 (WLRI…STIL), 77–97 (TWMG…FRFF), 113–133 (FSSF…VSAN), 139–159 (VGLL…QLAF), 172–192 (FTPF…LLVV), 208–228 (VIGI…LSLV), 247–267 (LVAY…FASG), 289–309 (TLAS…GLIF), 315–335 (FSNS…VIVF), and 344–364 (IFSI…HYLD). Residues 373 to 394 (TSPVGDPHLLPAEEGHTNIHSV) are disordered. Residues 383-394 (PAEEGHTNIHSV) show a composition bias toward basic and acidic residues.

It belongs to the purine permeases (TC 2.A.7.14) family.

It is found in the membrane. The sequence is that of Probable purine permease 8 (PUP8) from Arabidopsis thaliana (Mouse-ear cress).